The primary structure comprises 148 residues: Ribonuclease H (148 aa).

In terms of domain architecture, RNase H type-1 spans Met1 to Lys141. Asp9, Glu47, Asp69, and Asp133 together coordinate Mg(2+).

This sequence belongs to the RNase H family. In terms of assembly, monomer. It depends on Mg(2+) as a cofactor.

The protein resides in the cytoplasm. The catalysed reaction is Endonucleolytic cleavage to 5'-phosphomonoester.. In terms of biological role, endonuclease that specifically degrades the RNA of RNA-DNA hybrids. This chain is Ribonuclease H, found in Hahella chejuensis (strain KCTC 2396).